The chain runs to 391 residues: Polyketide synthase 1 (391 aa).

Cysteine 164 is an active-site residue.

The protein belongs to the thiolase-like superfamily. Chalcone/stilbene synthases family. In terms of assembly, homodimer. As to expression, expressed in fruits.

The enzyme catalyses (E)-4-coumaroyl-CoA + 3 malonyl-CoA + 3 H(+) = 2',4,4',6'-tetrahydroxychalcone + 3 CO2 + 4 CoA. It functions in the pathway secondary metabolite biosynthesis; flavonoid biosynthesis. In terms of biological role, polyketide synthase producing naringenin chalcone and slightly p-coumaryltriacetic acid lactone (CTAL). Can use p-coumaryl-CoA as substrate. In Rubus idaeus (Raspberry), this protein is Polyketide synthase 1 (PKS1).